Here is a 293-residue protein sequence, read N- to C-terminus: Epidermal growth factor-like protein 8 (293 aa).

The N-terminal stretch at 1–25 (MGSRAELCTLLGGFSFLLLLIPGEG) is a signal peptide. The EMI domain maps to 34–112 (SQGVCSKQTL…RHPGALTCEA (79 aa)). 9 disulfide bridges follow: Cys-38-Cys-97, Cys-65-Cys-71, Cys-96-Cys-110, Cys-114-Cys-124, Cys-118-Cys-130, Cys-132-Cys-141, Cys-148-Cys-159, Cys-155-Cys-168, and Cys-170-Cys-183. N-linked (GlcNAc...) asparagine glycosylation is present at Asn-50. Residues 111-142 (EAICAKPCLNGGVCVRPDQCECAPGWGGKHCH) enclose the EGF-like 1 domain. In terms of domain architecture, EGF-like 2; calcium-binding spans 144-184 (DVDECRTSITLCSHHCFNTAGSFTCGCPHDLVLGVDGRTCM). A coiled-coil region spans residues 195–232 (SILSVAVREAEKDERALKQEIHELRGRLERLEQWAGQA).

The protein resides in the secreted. The polypeptide is Epidermal growth factor-like protein 8 (EGFL8) (Homo sapiens (Human)).